The chain runs to 324 residues: uncharacterized protein (324 aa).

The next 8 helical transmembrane spans lie at 5–24 (VIGI…NRAM), 39–61 (FIFM…PLLL), 68–90 (FYWI…FAAA), 95–117 (WLIA…LFYV), 130–152 (QKIP…LIQL), 162–179 (MLLF…AYPL), 199–218 (LGMT…YGWW), and 228–250 (TVQS…FWAT).

Its subcellular location is the cell membrane. This is an uncharacterized protein from Bacillus subtilis (strain 168).